The following is a 253-amino-acid chain: MVRLTTELFAERPQFVNSVNMREINLRGQKIPVIENMGVTRDQFDVIDLTDNDIRKLDNFPTFSRLNTLYLHNNRINYIAPDIATKLPNLKTLALTNNNICELGDIEPLAECKKLEYVTFIGNPITHKDNYRMYMIYKLPTVRVIDFNRVRLTEREAAKKMFKGKSGKKARDAIQKSVHTEDPSEIEPNENSSGGGARLTDEDREKIKEAIKNAKSLSEVNYLQSILASGKVPEKGWNRQMDQNGADGEAMES.

4 LRR repeats span residues 20–41 (NMRE…GVTR), 43–64 (QFDV…PTFS), 65–86 (RLNT…IATK), and 89–110 (NLKT…EPLA). The region spanning 123–161 (NPITHKDNYRMYMIYKLPTVRVIDFNRVRLTEREAAKKM) is the LRRCT domain. 2 disordered regions span residues 163–205 (KGKS…EDRE) and 232–253 (VPEK…AMES). The segment covering 169–182 (KARDAIQKSVHTED) has biased composition (basic and acidic residues).

Belongs to the U2 small nuclear ribonucleoprotein A family. Interacts with rnp-3.

It localises to the nucleus. This protein is associated with sn-RNP U2. It helps the A' protein to bind stem loop IV of U2 snRNA. Required maternally for early embryonic development and zygotically for germline and somatic development. Has a role in the switch from mitosis to meiosis. Might function in alternative splicing. In Caenorhabditis elegans, this protein is Probable U2 small nuclear ribonucleoprotein A' (mog-2).